Here is a 110-residue protein sequence, read N- to C-terminus: Thioredoxin Asp f 29 (110 aa).

Positions methionine 1–alanine 110 constitute a Thioredoxin domain. Residues cysteine 34 and cysteine 37 each act as nucleophile in the active site. Residues cysteine 34 and cysteine 37 are joined by a disulfide bond.

This sequence belongs to the thioredoxin family.

Its function is as follows. Participates in various redox reactions through the reversible oxidation of its active center dithiol to a disulfide and catalyzes dithiol-disulfide exchange reactions. The sequence is that of Thioredoxin Asp f 29 from Aspergillus fumigatus (Neosartorya fumigata).